Reading from the N-terminus, the 296-residue chain is Lipoyl synthase (296 aa).

[4Fe-4S] cluster contacts are provided by Cys37, Cys42, Cys48, Cys63, Cys67, Cys70, and Ser276. Residues 49-265 (WSKKHATMMI…ERVARTKGFL (217 aa)) form the Radical SAM core domain.

It belongs to the radical SAM superfamily. Lipoyl synthase family. The cofactor is [4Fe-4S] cluster.

It is found in the cytoplasm. It carries out the reaction [[Fe-S] cluster scaffold protein carrying a second [4Fe-4S](2+) cluster] + N(6)-octanoyl-L-lysyl-[protein] + 2 oxidized [2Fe-2S]-[ferredoxin] + 2 S-adenosyl-L-methionine + 4 H(+) = [[Fe-S] cluster scaffold protein] + N(6)-[(R)-dihydrolipoyl]-L-lysyl-[protein] + 4 Fe(3+) + 2 hydrogen sulfide + 2 5'-deoxyadenosine + 2 L-methionine + 2 reduced [2Fe-2S]-[ferredoxin]. The protein operates within protein modification; protein lipoylation via endogenous pathway; protein N(6)-(lipoyl)lysine from octanoyl-[acyl-carrier-protein]: step 2/2. Its function is as follows. Catalyzes the radical-mediated insertion of two sulfur atoms into the C-6 and C-8 positions of the octanoyl moiety bound to the lipoyl domains of lipoate-dependent enzymes, thereby converting the octanoylated domains into lipoylated derivatives. The sequence is that of Lipoyl synthase from Rickettsia canadensis (strain McKiel).